Consider the following 117-residue polypeptide: Small ribosomal subunit protein bS6 (117 aa).

The segment at 96-117 (KEAAAPAPKAAPVESAPAVEAE) is disordered. Low complexity predominate over residues 99 to 117 (AAPAPKAAPVESAPAVEAE).

Belongs to the bacterial ribosomal protein bS6 family.

Its function is as follows. Binds together with bS18 to 16S ribosomal RNA. The protein is Small ribosomal subunit protein bS6 of Geobacter sulfurreducens (strain ATCC 51573 / DSM 12127 / PCA).